Here is an 83-residue protein sequence, read N- to C-terminus: Exodeoxyribonuclease 7 small subunit (83 aa).

This sequence belongs to the XseB family. As to quaternary structure, heterooligomer composed of large and small subunits.

It is found in the cytoplasm. The catalysed reaction is Exonucleolytic cleavage in either 5'- to 3'- or 3'- to 5'-direction to yield nucleoside 5'-phosphates.. Functionally, bidirectionally degrades single-stranded DNA into large acid-insoluble oligonucleotides, which are then degraded further into small acid-soluble oligonucleotides. In Allorhizobium ampelinum (strain ATCC BAA-846 / DSM 112012 / S4) (Agrobacterium vitis (strain S4)), this protein is Exodeoxyribonuclease 7 small subunit.